We begin with the raw amino-acid sequence, 60 residues long: Large ribosomal subunit protein uL30 (60 aa).

Belongs to the universal ribosomal protein uL30 family. Part of the 50S ribosomal subunit.

This Idiomarina loihiensis (strain ATCC BAA-735 / DSM 15497 / L2-TR) protein is Large ribosomal subunit protein uL30.